The sequence spans 494 residues: UPF0371 protein stu1377 (494 aa).

Belongs to the UPF0371 family.

In Streptococcus thermophilus (strain ATCC BAA-250 / LMG 18311), this protein is UPF0371 protein stu1377.